The primary structure comprises 162 residues: Interleukin-15 (162 aa).

The first 29 residues, 1 to 29 (MRISKPYLRSTSIQCYLCLLLNSHFLAEA), serve as a signal peptide directing secretion. The propeptide occupies 30–48 (GIHVFIFGCISAGLPKTEA). Intrachain disulfides connect cysteine 83–cysteine 133 and cysteine 90–cysteine 136. 4 N-linked (GlcNAc...) asparagine glycosylation sites follow: asparagine 108, asparagine 119, asparagine 127, and asparagine 143.

Belongs to the IL-15/IL-21 family. In terms of tissue distribution, expressed in many tissues including heart, spleen, lung, liver, muscle and kidney (at mRNA level). Expressed in many tissues including heart, spleen, lung, liver, muscle and kidney (at protein level).

It is found in the secreted. In terms of biological role, cytokine that plays a major role in the development of inflammatory and protective immune responses to microbial invaders and parasites by modulating immune cells of both the innate and adaptive immune systems. Stimulates the proliferation of natural killer cells, T-cells and B-cells and promotes the secretion of several cytokines. In monocytes, induces the production of IL8 and monocyte chemotactic protein 1/CCL2, two chemokines that attract neutrophils and monocytes respectively to sites of infection. Unlike most cytokines, which are secreted in soluble form, IL15 is expressed in association with its high affinity IL15RA on the surface of IL15-producing cells and delivers signals to target cells that express IL2RB and IL2RG receptor subunits. Binding to its receptor triggers the phosphorylation of JAK1 and JAK3 and the recruitment and subsequent phosphorylation of signal transducer and activator of transcription-3/STAT3 and STAT5. In mast cells, induces the rapid tyrosine phosphorylation of STAT6 and thereby controls mast cell survival and release of cytokines such as IL4. This Oryctolagus cuniculus (Rabbit) protein is Interleukin-15 (IL15).